The sequence spans 118 residues: Small ribosomal subunit protein uS13 (118 aa).

The interval 94 to 118 is disordered; sequence SLPLRGQRTKTNARTRKGPRKPIRK.

Belongs to the universal ribosomal protein uS13 family. Part of the 30S ribosomal subunit. Forms a loose heterodimer with protein S19. Forms two bridges to the 50S subunit in the 70S ribosome.

In terms of biological role, located at the top of the head of the 30S subunit, it contacts several helices of the 16S rRNA. In the 70S ribosome it contacts the 23S rRNA (bridge B1a) and protein L5 of the 50S subunit (bridge B1b), connecting the 2 subunits; these bridges are implicated in subunit movement. Contacts the tRNAs in the A and P-sites. The protein is Small ribosomal subunit protein uS13 of Shewanella denitrificans (strain OS217 / ATCC BAA-1090 / DSM 15013).